We begin with the raw amino-acid sequence, 263 residues long: Undecaprenyl-diphosphatase (263 aa).

8 helical membrane passes run 1–21 (MSYL…FLPI), 41–61 (FTKA…LVLY), 69–89 (WGFY…GFVV), 96–116 (LMGS…ILIW), 147–167 (AIAM…GLTL), 177–197 (FSFF…LLKI), 208–228 (LLLV…KFFI), and 238–258 (GFGY…YTGH).

This sequence belongs to the UppP family.

Its subcellular location is the cell inner membrane. The enzyme catalyses di-trans,octa-cis-undecaprenyl diphosphate + H2O = di-trans,octa-cis-undecaprenyl phosphate + phosphate + H(+). Functionally, catalyzes the dephosphorylation of undecaprenyl diphosphate (UPP). Confers resistance to bacitracin. In Bdellovibrio bacteriovorus (strain ATCC 15356 / DSM 50701 / NCIMB 9529 / HD100), this protein is Undecaprenyl-diphosphatase.